The sequence spans 214 residues: Phosphatidylcholine transfer protein (214 aa).

Residue methionine 1 is modified to N-acetylmethionine. The START domain maps to methionine 1–lysine 212. 2 residues coordinate a 1,2-diacyl-sn-glycero-3-phosphocholine: tyrosine 72 and arginine 78. Serine 139 is subject to Phosphoserine. Glutamine 157 serves as a coordination point for a 1,2-diacyl-sn-glycero-3-phosphocholine.

As to quaternary structure, interacts with ACOT13/THEM2.

It localises to the cytoplasm. Its function is as follows. Lipid transfer protein that promotes intermembrane transfer of phosphatidylcholines but no other phospholipids. Binds a single lipid molecule. May play a role in hepatocellular selection and transport of phosphatidylcholines during bile formation. In Rattus norvegicus (Rat), this protein is Phosphatidylcholine transfer protein (Pctp).